The sequence spans 337 residues: Diacylglycerol O-acyltransferase 2-like protein 6 (337 aa).

2 consecutive transmembrane segments (helical) span residues 22–42 (IPVY…LLLF) and 102–122 (YIIL…NFAT).

This sequence belongs to the diacylglycerol acyltransferase family.

It localises to the endoplasmic reticulum membrane. It carries out the reaction 1,2-di-(9Z-octadecenoyl)-sn-glycerol + (9Z)-octadecenoyl-CoA = 1,2,3-tri-(9Z-octadecenoyl)-glycerol + CoA. Functionally, diglyceride acyltransferase that uses fatty acyl-CoA as substrate. Particularly active with oleate as a substrate. Has no wax synthase activity to produce wax esters. This chain is Diacylglycerol O-acyltransferase 2-like protein 6 (Dgat2l6), found in Mus musculus (Mouse).